Here is a 161-residue protein sequence, read N- to C-terminus: Fatty acid-binding protein homolog 2 (161 aa).

An N-terminal signal peptide occupies residues Met-1–Ala-19.

The protein belongs to the calycin superfamily. Fatty-acid binding protein (FABP) family.

The protein resides in the secreted. May play a role in sequestering potentially toxic fatty acids and their peroxidation products, or it may be involved in the maintenance of the impermeable lipid layer of the eggshell. The polypeptide is Fatty acid-binding protein homolog 2 (lbp-2) (Caenorhabditis elegans).